Consider the following 151-residue polypeptide: Small ribosomal subunit protein uS11 (151 aa).

Residues 129–151 (IEDVTPVPSDSTRRKGGRRGRRL) are disordered. Residues 142-151 (RKGGRRGRRL) are compositionally biased toward basic residues.

The protein belongs to the universal ribosomal protein uS11 family.

This is Small ribosomal subunit protein uS11 (RPS14) from Procambarus clarkii (Red swamp crayfish).